Consider the following 1091-residue polypeptide: ATP-dependent helicase/deoxyribonuclease subunit B (1091 aa).

Belongs to the helicase family. AddB/RexB type 2 subfamily. As to quaternary structure, heterodimer of AddA and RexB. Mg(2+) serves as cofactor.

Its function is as follows. The heterodimer acts as both an ATP-dependent DNA helicase and an ATP-dependent, dual-direction single-stranded exonuclease. Recognizes the chi site generating a DNA molecule suitable for the initiation of homologous recombination. This subunit has 5' -&gt; 3' nuclease activity but not helicase activity. This chain is ATP-dependent helicase/deoxyribonuclease subunit B, found in Streptococcus pneumoniae (strain CGSP14).